The primary structure comprises 308 residues: Transaldolase (308 aa).

Catalysis depends on Lys-125, which acts as the Schiff-base intermediate with substrate.

It belongs to the transaldolase family. Type 1 subfamily. Homodimer.

It is found in the cytoplasm. The enzyme catalyses D-sedoheptulose 7-phosphate + D-glyceraldehyde 3-phosphate = D-erythrose 4-phosphate + beta-D-fructose 6-phosphate. It functions in the pathway carbohydrate degradation; pentose phosphate pathway; D-glyceraldehyde 3-phosphate and beta-D-fructose 6-phosphate from D-ribose 5-phosphate and D-xylulose 5-phosphate (non-oxidative stage): step 2/3. Transaldolase is important for the balance of metabolites in the pentose-phosphate pathway. This is Transaldolase from Pseudomonas fluorescens (strain Pf0-1).